The chain runs to 378 residues: MKILVDENMPYARELFSRLGEVQAVPGRPLPRELLVGADALMVRSVTKVNANLLFGSSVKFVGSATAGTDHVDDTWLNANGIAFSAAPGCNAIAVVEYVFSSLLMLAERDGFQLRDKTVGIVGVGNVGRRLDTRLKAWGVKTLLCDPPRADRGDAGDFLSLETLVRDADILTLHTPLYLDGPYRTHHLVDATVLNAFADGRILINACRGPVVDNAALLEALQQGKKLSVILDVWEPEPGLSTDLLARVDIGTAHIAGYTLEGKARGTTQVFEAWSEFIGTPQQIALSSLLPEPDYAEVTLTAPVDEALLKRLVHLVYDVRRDDALLRHAAHQEGEFDRLRKHYQERREWSSLHVICADVESADCLNALGFNASVRGAR.

The substrate site is built by serine 45 and threonine 66. NAD(+) contacts are provided by aspartate 146 and threonine 175. Arginine 208 is a catalytic residue. An NAD(+)-binding site is contributed by aspartate 232. Residue glutamate 237 is part of the active site. Catalysis depends on histidine 254, which acts as the Proton donor. Glycine 257 is an NAD(+) binding site. Tyrosine 258 provides a ligand contact to substrate.

The protein belongs to the D-isomer specific 2-hydroxyacid dehydrogenase family. PdxB subfamily. Homodimer.

The protein resides in the cytoplasm. The catalysed reaction is 4-phospho-D-erythronate + NAD(+) = (R)-3-hydroxy-2-oxo-4-phosphooxybutanoate + NADH + H(+). It functions in the pathway cofactor biosynthesis; pyridoxine 5'-phosphate biosynthesis; pyridoxine 5'-phosphate from D-erythrose 4-phosphate: step 2/5. Functionally, catalyzes the oxidation of erythronate-4-phosphate to 3-hydroxy-2-oxo-4-phosphonooxybutanoate. This Pectobacterium atrosepticum (strain SCRI 1043 / ATCC BAA-672) (Erwinia carotovora subsp. atroseptica) protein is Erythronate-4-phosphate dehydrogenase.